A 168-amino-acid polypeptide reads, in one-letter code: D-aminoacyl-tRNA deacylase 2 (168 aa).

The Gly-transPro motif, allows the protein to recognize chirality of D-amino acids signature appears at 160-161 (GP).

This sequence belongs to the DTD family. As to quaternary structure, homodimer.

It localises to the cytoplasm. It catalyses the reaction a D-aminoacyl-tRNA + H2O = a tRNA + a D-alpha-amino acid + H(+). It carries out the reaction glycyl-tRNA(Ala) + H2O = tRNA(Ala) + glycine + H(+). The enzyme catalyses D-tyrosyl-tRNA(Tyr) + H2O = D-tyrosine + tRNA(Tyr). The catalysed reaction is L-alanyl-tRNA(Thr) + H2O = tRNA(Thr) + L-alanine + H(+). Functionally, deacylates mischarged D-aminoacyl-tRNAs. Also deacylates mischarged glycyl-tRNA(Ala), protecting cells against glycine mischarging by AlaRS. Probably acts by rejecting L-amino acids from its binding site rather than specific recognition of D-amino acids. Catalyzes the hydrolysis of D-tyrosyl-tRNA(Tyr), has no activity on correctly charged L-tyrosyl-tRNA(Tyr). By recycling D-aminoacyl-tRNA to D-amino acids and free tRNA molecules, this enzyme counteracts the toxicity associated with the formation of D-aminoacyl-tRNA entities in vivo and helps enforce protein L-homochirality. In contrast to DTD1, deacylates L-Ala mischarged on tRNA(Thr)(G4.U69) by alanine-tRNA ligase AARS. Can deacylate L-Ala due to a relaxed specificity for substrate chirality caused by the trans conformation of the Gly-Pro motif in the active site. Also hydrolyzes correctly charged, achiral, glycyl-tRNA(Gly) in vitro, although in vivo EEF1A1/EF-Tu may protect cognate achiral glycyl-tRNA(Gly) from DTD2-mediated deacetylation. The protein is D-aminoacyl-tRNA deacylase 2 (DTD2) of Homo sapiens (Human).